A 413-amino-acid chain; its full sequence is Unsaturated 3S-rhamnoglycuronyl hydrolase (413 aa).

The N-terminal stretch at 1-21 is a signal peptide; that stretch reads MNHTKLKLSAVALTLALGLSA. A lipid anchor (N-palmitoyl cysteine) is attached at Cys22. The S-diacylglycerol cysteine moiety is linked to residue Cys22. The active-site Proton donor is Asp203.

It belongs to the glycosyl hydrolase 105 family.

The protein resides in the cell membrane. Its function is as follows. Glucuronyl hydrolase involved in ulvan degradation. Ulvan is the main polysaccharide component of the Ulvales (green seaweed) cell wall. It is composed of disaccharide building blocks comprising 3-sulfated rhamnose (Rha3S) linked to D-glucuronic acid (GlcA), L-iduronic acid (IduA), or D-xylose (Xyl). Unsaturated 3S-rhamnoglycuronyl hydrolase works together with ulvan lyases to fully degrade the ulvan polymer, catalyzing specifically the cleavage of the unsaturated 4-deoxy-L-threo-hex-4-enopyranosiduronic acid (deltaUA) of the deltaUA-oligosaccharides deltaUA-Rha3S, deltaUA-Rha3S-IduA-Rha3S and deltaUA-Rha3S-Xyl-Rha3S, the end products of the ulvan lyase reaction. This chain is Unsaturated 3S-rhamnoglycuronyl hydrolase, found in Alteromonas sp. (strain LOR).